The sequence spans 213 residues: Pyridoxine/pyridoxamine 5'-phosphate oxidase (213 aa).

Substrate-binding positions include Arg-8–Tyr-11 and Lys-66. FMN-binding positions include Arg-61 to Lys-66, Tyr-76 to Thr-77, Arg-82, Lys-83, and Gln-105. Tyr-123, Arg-127, and Ser-131 together coordinate substrate. Residues Gln-140–Ser-141 and Trp-185 each bind FMN. Arg-191–His-193 is a substrate binding site. Arg-195 contributes to the FMN binding site.

Belongs to the pyridoxamine 5'-phosphate oxidase family. As to quaternary structure, homodimer. The cofactor is FMN.

The catalysed reaction is pyridoxamine 5'-phosphate + O2 + H2O = pyridoxal 5'-phosphate + H2O2 + NH4(+). It carries out the reaction pyridoxine 5'-phosphate + O2 = pyridoxal 5'-phosphate + H2O2. It participates in cofactor metabolism; pyridoxal 5'-phosphate salvage; pyridoxal 5'-phosphate from pyridoxamine 5'-phosphate: step 1/1. Its pathway is cofactor metabolism; pyridoxal 5'-phosphate salvage; pyridoxal 5'-phosphate from pyridoxine 5'-phosphate: step 1/1. In terms of biological role, catalyzes the oxidation of either pyridoxine 5'-phosphate (PNP) or pyridoxamine 5'-phosphate (PMP) into pyridoxal 5'-phosphate (PLP). This Pseudoalteromonas atlantica (strain T6c / ATCC BAA-1087) protein is Pyridoxine/pyridoxamine 5'-phosphate oxidase.